A 460-amino-acid polypeptide reads, in one-letter code: Interleukin-1 receptor-associated kinase 4 (460 aa).

An N-acetylmethionine modification is found at methionine 1. The Death domain occupies 20–104; the sequence is RKLSDFIDPQ…APASLLLPDA (85 aa). Residue lysine 34 is modified to N6-acetyllysine. Residues 186 to 454 form the Protein kinase domain; it reads SVGGNKMGEG…PDIKKVQQLL (269 aa). ATP is bound by residues 192–200 and lysine 213; that span reads MGEGGFGVV. Catalysis depends on aspartate 311, which acts as the Proton acceptor. Residues 313–316 and aspartate 329 each bind ATP; that span reads KSAN. A phosphothreonine mark is found at threonine 342 and threonine 345. Serine 346 carries the post-translational modification Phosphoserine.

Belongs to the protein kinase superfamily. TKL Ser/Thr protein kinase family. Pelle subfamily. In terms of assembly, associates with MYD88 and IRAK2 to form a ternary complex called the Myddosome. Once phosphorylated, IRAK4 dissociates from the receptor complex and then associates with the TNF receptor-associated factor 6 (TRAF6), IRAK1, and PELI1; this intermediate complex is required for subsequent NF-kappa-B activation. Direct binding of SMAD6 to PELI1 prevents complex formation and hence negatively regulates IL1R-TLR signaling and eventually NF-kappa-B-mediated gene expression. Interacts with IL1RL1. Interacts (when phosphorylated) with IRAK1. May interact (when phosphorylated) with IRAK3. The cofactor is Mg(2+). Phosphorylated.

The protein resides in the cytoplasm. It catalyses the reaction L-seryl-[protein] + ATP = O-phospho-L-seryl-[protein] + ADP + H(+). The enzyme catalyses L-threonyl-[protein] + ATP = O-phospho-L-threonyl-[protein] + ADP + H(+). Serine/threonine-protein kinase that plays a critical role in initiating innate immune response against foreign pathogens. Involved in Toll-like receptor (TLR) and IL-1R signaling pathways. Is rapidly recruited by MYD88 to the receptor-signaling complex upon TLR activation to form the Myddosome together with IRAK2. Phosphorylates initially IRAK1, thus stimulating the kinase activity and intensive autophosphorylation of IRAK1. Phosphorylates E3 ubiquitin ligases Pellino proteins (PELI1, PELI2 and PELI3) to promote pellino-mediated polyubiquitination of IRAK1. Then, the ubiquitin-binding domain of IKBKG/NEMO binds to polyubiquitinated IRAK1 bringing together the IRAK1-MAP3K7/TAK1-TRAF6 complex and the NEMO-IKKA-IKKB complex. In turn, MAP3K7/TAK1 activates IKKs (CHUK/IKKA and IKBKB/IKKB) leading to NF-kappa-B nuclear translocation and activation. Alternatively, phosphorylates TIRAP to promote its ubiquitination and subsequent degradation. Phosphorylates NCF1 and regulates NADPH oxidase activation after LPS stimulation suggesting a similar mechanism during microbial infections. This is Interleukin-1 receptor-associated kinase 4 (IRAK4) from Homo sapiens (Human).